We begin with the raw amino-acid sequence, 326 residues long: Regulation of nuclear pre-mRNA domain-containing protein 1B (326 aa).

At Ser2 the chain carries N-acetylserine. The CID domain occupies 2-133; the sequence is SSFSESALEK…QLKLSMEDSK (132 aa). Basic and acidic residues predominate over residues 128–144; sequence SMEDSKSPPPKAAEEKK. Residues 128–148 form a disordered region; that stretch reads SMEDSKSPPPKAAEEKKSLKR. Residues Ser132 and Ser134 each carry the phosphoserine modification. Tyr161 bears the Phosphotyrosine mark. Residues Ser166 and Ser299 each carry the phosphoserine modification.

Belongs to the UPF0400 (RTT103) family. In terms of assembly, homodimer. May form a heterodimer with RPRD1A. Associates with RPAP2. Associates with the RNA polymerase II complex. As to expression, widely expressed in the adult with highest levels in liver, colon, prostate and uterus and lowest levels in heart and kidney. Not detected in rectum.

It is found in the nucleus. In terms of biological role, interacts with phosphorylated C-terminal heptapeptide repeat domain (CTD) of the largest RNA polymerase II subunit POLR2A, and participates in dephosphorylation of the CTD by RPAP2. Transcriptional regulator which enhances expression of CCND1. Promotes binding of RNA polymerase II to the CCDN1 promoter and to the termination region before the poly-A site but decreases its binding after the poly-A site. Prevents RNA polymerase II from reading through the 3' end termination site and may allow it to be recruited back to the promoter through promotion of the formation of a chromatin loop. Also enhances the transcription of a number of other cell cycle-related genes including CDK2, CDK4, CDK6 and cyclin-E but not CDKN1A, CDKN1B or cyclin-A. Promotes cell proliferation. This Mus musculus (Mouse) protein is Regulation of nuclear pre-mRNA domain-containing protein 1B (Rprd1b).